We begin with the raw amino-acid sequence, 637 residues long: Threonine--tRNA ligase (637 aa).

The TGS domain maps to 1 to 61 (MIKISLKNGK…NKDCKVEILT (61 aa)). A catalytic region spans residues 242–532 (DHRKLGKELD…LIEHYAGAFP (291 aa)). The Zn(2+) site is built by cysteine 333, histidine 384, and histidine 509.

This sequence belongs to the class-II aminoacyl-tRNA synthetase family. Homodimer. Zn(2+) serves as cofactor.

The protein resides in the cytoplasm. The catalysed reaction is tRNA(Thr) + L-threonine + ATP = L-threonyl-tRNA(Thr) + AMP + diphosphate + H(+). Its function is as follows. Catalyzes the attachment of threonine to tRNA(Thr) in a two-step reaction: L-threonine is first activated by ATP to form Thr-AMP and then transferred to the acceptor end of tRNA(Thr). Also edits incorrectly charged L-seryl-tRNA(Thr). The chain is Threonine--tRNA ligase from Clostridium kluyveri (strain NBRC 12016).